Here is a 453-residue protein sequence, read N- to C-terminus: Allantoinase (453 aa).

The Zn(2+) site is built by His59, His61, Lys146, His186, His242, and Asp315. Lys146 is modified (N6-carboxylysine).

Belongs to the metallo-dependent hydrolases superfamily. Allantoinase family. As to quaternary structure, homotetramer. The cofactor is Zn(2+). In terms of processing, carboxylation allows a single lysine to coordinate two zinc ions.

It carries out the reaction (S)-allantoin + H2O = allantoate + H(+). Its pathway is nitrogen metabolism; (S)-allantoin degradation; allantoate from (S)-allantoin: step 1/1. Catalyzes the conversion of allantoin (5-ureidohydantoin) to allantoic acid by hydrolytic cleavage of the five-member hydantoin ring. The polypeptide is Allantoinase (Escherichia coli (strain 55989 / EAEC)).